The primary structure comprises 89 residues: Co-chaperonin GroES (89 aa).

Belongs to the GroES chaperonin family. As to quaternary structure, heptamer of 7 subunits arranged in a ring. Interacts with the chaperonin GroEL.

The protein resides in the cytoplasm. Functionally, together with the chaperonin GroEL, plays an essential role in assisting protein folding. The GroEL-GroES system forms a nano-cage that allows encapsulation of the non-native substrate proteins and provides a physical environment optimized to promote and accelerate protein folding. GroES binds to the apical surface of the GroEL ring, thereby capping the opening of the GroEL channel. The sequence is that of Co-chaperonin GroES from Petrotoga mobilis (strain DSM 10674 / SJ95).